The primary structure comprises 615 residues: tRNA uridine 5-carboxymethylaminomethyl modification enzyme MnmG (615 aa).

11 to 16 contacts FAD; it reads GLGHAG. 278-292 contacts NAD(+); it reads GPRYCPSLEDKVVRF.

The protein belongs to the MnmG family. Homodimer. Heterotetramer of two MnmE and two MnmG subunits. FAD serves as cofactor.

It localises to the cytoplasm. In terms of biological role, NAD-binding protein involved in the addition of a carboxymethylaminomethyl (cmnm) group at the wobble position (U34) of certain tRNAs, forming tRNA-cmnm(5)s(2)U34. This chain is tRNA uridine 5-carboxymethylaminomethyl modification enzyme MnmG, found in Myxococcus xanthus (strain DK1622).